The primary structure comprises 429 residues: Serine--tRNA ligase (429 aa).

Residue 235–237 (TAE) participates in L-serine binding. 266–268 (RSE) is an ATP binding site. Residue Glu289 participates in L-serine binding. 353–356 (EISS) contributes to the ATP binding site. L-serine is bound at residue Ser389.

Belongs to the class-II aminoacyl-tRNA synthetase family. Type-1 seryl-tRNA synthetase subfamily. Homodimer. The tRNA molecule binds across the dimer.

It is found in the cytoplasm. The catalysed reaction is tRNA(Ser) + L-serine + ATP = L-seryl-tRNA(Ser) + AMP + diphosphate + H(+). The enzyme catalyses tRNA(Sec) + L-serine + ATP = L-seryl-tRNA(Sec) + AMP + diphosphate + H(+). The protein operates within aminoacyl-tRNA biosynthesis; selenocysteinyl-tRNA(Sec) biosynthesis; L-seryl-tRNA(Sec) from L-serine and tRNA(Sec): step 1/1. Functionally, catalyzes the attachment of serine to tRNA(Ser). Is also able to aminoacylate tRNA(Sec) with serine, to form the misacylated tRNA L-seryl-tRNA(Sec), which will be further converted into selenocysteinyl-tRNA(Sec). The chain is Serine--tRNA ligase from Haemophilus influenzae (strain PittGG).